The primary structure comprises 131 residues: Profilin-2 (131 aa).

A disulfide bridge links C13 with C115. An Involved in PIP2 interaction motif is present at residues 81-97; it reads AVIRGKKGAGGITIKKT. T111 carries the post-translational modification Phosphothreonine.

It belongs to the profilin family. As to quaternary structure, occurs in many kinds of cells as a complex with monomeric actin in a 1:1 ratio. Phosphorylated by MAP kinases.

The protein resides in the cytoplasm. Its subcellular location is the cytoskeleton. Functionally, binds to actin and affects the structure of the cytoskeleton. At high concentrations, profilin prevents the polymerization of actin, whereas it enhances it at low concentrations. By binding to PIP2, it inhibits the formation of IP3 and DG. The protein is Profilin-2 (PRO2) of Phleum pratense (Common timothy).